A 430-amino-acid chain; its full sequence is Dihydroorotase (430 aa).

Zn(2+) is bound by residues histidine 60 and histidine 62. Residues 62–64 (HFR) and asparagine 94 contribute to the substrate site. Zn(2+) contacts are provided by aspartate 151, histidine 178, and histidine 231. Position 277 (asparagine 277) interacts with substrate. Aspartate 304 lines the Zn(2+) pocket. Aspartate 304 is an active-site residue. Residues histidine 308 and 322-323 (FG) contribute to the substrate site.

The protein belongs to the metallo-dependent hydrolases superfamily. DHOase family. Class I DHOase subfamily. Requires Zn(2+) as cofactor.

The enzyme catalyses (S)-dihydroorotate + H2O = N-carbamoyl-L-aspartate + H(+). The protein operates within pyrimidine metabolism; UMP biosynthesis via de novo pathway; (S)-dihydroorotate from bicarbonate: step 3/3. In terms of biological role, catalyzes the reversible cyclization of carbamoyl aspartate to dihydroorotate. The protein is Dihydroorotase of Carboxydothermus hydrogenoformans (strain ATCC BAA-161 / DSM 6008 / Z-2901).